Reading from the N-terminus, the 251-residue chain is Imidazole glycerol phosphate synthase subunit HisF (251 aa).

Residues Asp12 and Asp131 contribute to the active site.

This sequence belongs to the HisA/HisF family. In terms of assembly, heterodimer of HisH and HisF.

It is found in the cytoplasm. It catalyses the reaction 5-[(5-phospho-1-deoxy-D-ribulos-1-ylimino)methylamino]-1-(5-phospho-beta-D-ribosyl)imidazole-4-carboxamide + L-glutamine = D-erythro-1-(imidazol-4-yl)glycerol 3-phosphate + 5-amino-1-(5-phospho-beta-D-ribosyl)imidazole-4-carboxamide + L-glutamate + H(+). Its pathway is amino-acid biosynthesis; L-histidine biosynthesis; L-histidine from 5-phospho-alpha-D-ribose 1-diphosphate: step 5/9. IGPS catalyzes the conversion of PRFAR and glutamine to IGP, AICAR and glutamate. The HisF subunit catalyzes the cyclization activity that produces IGP and AICAR from PRFAR using the ammonia provided by the HisH subunit. The sequence is that of Imidazole glycerol phosphate synthase subunit HisF from Helicobacter hepaticus (strain ATCC 51449 / 3B1).